Reading from the N-terminus, the 529-residue chain is MGSSRAPWMGRVGGHGMMALLLAGLLLPGTLAKSIGTFSDPCKDPTRITSPNDPCLTGKGDSSGFSSYSGSSSSGSSISSARSSGGGSSGSSSGSSIAQGGSAGSFKPGTGYSQVSYSSGSGSSLQGASGSSQLGSSSSHSGNSGSHSGSSSSHSSSSSSFQFSSSSFQVGNGSALPTNDNSYRGILNPSQPGQSSSSSQTFGVSSSGQSVSSNQRPCSSDIPDSPCSGGPIVSHSGPYIPSSHSVSGGQRPVVVVVDQHGSGAPGVVQGPPCSNGGLPGKPCPPITSVDKSYGGYEVVGGSSDSYLVPGMTYSKGKIYPVGYFTKENPVKGSPGVPSFAAGPPISEGKYFSSNPIIPSQSAASSAIAFQPVGTGGVQLCGGGSTGSKGPCSPSSSRVPSSSSISSSSGLPYHPCGSASQSPCSPPGTGSFSSSSSSQSSGKIILQPCGSKSSSSGHPCMSVSSLTLTGGPDGSPHPDPSAGAKPCGSSSAGKIPCRSIRDILAQVKPLGPQLADPEVFLPQGELLNSP.

A signal peptide spans 1–32 (MGSSRAPWMGRVGGHGMMALLLAGLLLPGTLA). 2 disordered regions span residues 38-248 (FSDP…SVSG) and 383-492 (GSTG…SSAG). 6 stretches are compositionally biased toward low complexity: residues 58–83 (GKGD…SARS), 90–100 (GSSSGSSIAQG), 111–175 (GYSQ…NGSA), 189–231 (PSQP…SGGP), 392–408 (SPSS…SSSS), and 426–441 (PGTG…QSSG). Asn-172 carries N-linked (GlcNAc...) asparagine glycosylation. Positions 449-467 (GSKSSSSGHPCMSVSSLTL) are enriched in polar residues.

Exclusively expressed in skin.

It is found in the secreted. Its function is as follows. Important for the epidermal barrier integrity. The sequence is that of Corneodesmosin (CDSN) from Homo sapiens (Human).